The following is a 792-amino-acid chain: Pentatricopeptide repeat-containing protein At4g30700 (792 aa).

16 PPR repeats span residues 51–81, 82–117, 118–152, 153–183, 184–218, 220–254, 255–285, 286–320, 321–352, 353–383, 384–418, 419–453, 454–484, 485–519, 520–555, and 556–586; these read DISL…VQRP, DVFL…DLKP, NSST…GCDS, ELLL…MPEK, DTIL…SCTR, DTTT…GCYS, HDYV…FRKP, DIVA…GARL, RSST…NFLS, HASV…SPEK, SLPS…EFSP, NPVT…DFES, SIYV…MTKK, NEVT…GITP, TPVT…GFEP, and SVKH…MSIE. Positions 591-666 are type E motif; the sequence is VWETLLGACR…APGYTLIEIG (76 aa). The type E(+) motif stretch occupies residues 667 to 697; sequence ETPHVFTSGDQSHPQVKEIYEKLEKLEGKMR. The interval 698–792 is type DYW motif; that stretch reads EAGYQPETEL…DGVCSCGDYW (95 aa).

It belongs to the PPR family. PCMP-H subfamily.

The protein is Pentatricopeptide repeat-containing protein At4g30700 (DYW9) of Arabidopsis thaliana (Mouse-ear cress).